A 207-amino-acid chain; its full sequence is Protein Nef (207 aa).

The N-myristoyl glycine; by host moiety is linked to residue G2. Phosphoserine; by host is present on S6. The tract at residues 62 to 66 (EEEEE) is acidic; interacts with host PACS1 and PACS2; stabilizes the interaction of NEF/MHC-I with host AP1M1; necessary for MHC-I internalization. The SH3-binding; interaction with Src family tyrosine kinases stretch occupies residues 70–79 (PVRPQVPLRP). The PxxP; stabilizes the interaction of NEF/MHC-I with host AP1M1; necessary for MHC-I internalization motif lies at 73-76 (PQVP). The segment at 109–125 (EILDLWVYNTQGYFPDW) is mediates dimerization, Nef-PTE1 interaction. The interval 149–181 (VDPQDVEKANEGENNSLLHPMCQHGIEDPEREV) is binding to ATP6V1H. The Dileucine internalization motif; necessary for CD4 internalization motif lies at 165–166 (LL). Residues 175 to 176 (ED) carry the Diacidic; necessary for CD4 internalization motif.

The protein belongs to the lentivirus primate group Nef protein family. Monomer; cytosolic form. Homodimer; membrane bound form. Interacts with Nef associated p21-activated kinase (PAK2); this interaction activates PAK2. Associates with the Nef-MHC-I-AP1 complex; this complex is required for MHC-I internalization. Interacts (via C-terminus) with host PI3-kinase. Interacts with host PACS1; this interaction seems to be weak. Interacts with host PACS2. Interacts with host LCK and MAPK3; these interactions inhibit the kinase activity of the latter. Interacts with host ATP6V1H; this interaction may play a role in CD4 endocytosis. Associates with the CD4-Nef-AP2 complex; this complex is required for CD4 internalization. Interacts with host AP2 subunit alpha and AP2 subunit sigma2. Interacts with TCR-zeta chain; this interaction up-regulates the Fas ligand (FasL) surface expression. Interacts with host HCK, LYN, and SRC; these interactions activate the Src family kinases. Interacts with MAP3K5; this interaction inhibits the Fas and TNFR-mediated death signals. Interacts with beta-COP and PTE1. Interacts with human RACK1; this increases Nef phosphorylation by PKC. Interacts with TP53; this interaction decreases the half-life of TP53, protecting the infected cell against p53-mediated apoptosis. The virion-associated Nef proteins are cleaved by the viral protease to release the soluble C-terminal core protein. Nef is probably cleaved concomitantly with viral structural proteins on maturation of virus particles. Post-translationally, myristoylated. In terms of processing, phosphorylated on serine residues, probably by host PKCdelta and theta.

The protein resides in the host cell membrane. The protein localises to the virion. It is found in the secreted. Its subcellular location is the host Golgi apparatus membrane. Its function is as follows. Factor of infectivity and pathogenicity, required for optimal virus replication. Alters numerous pathways of T-lymphocyte function and down-regulates immunity surface molecules in order to evade host defense and increase viral infectivity. Alters the functionality of other immunity cells, like dendritic cells, monocytes/macrophages and NK cells. In terms of biological role, in infected CD4(+) T-lymphocytes, down-regulates the surface MHC-I, mature MHC-II, CD4, CD28, CCR5 and CXCR4 molecules. Mediates internalization and degradation of host CD4 through the interaction of with the cytoplasmic tail of CD4, the recruitment of AP-2 (clathrin adapter protein complex 2), internalization through clathrin coated pits, and subsequent transport to endosomes and lysosomes for degradation. Diverts host MHC-I molecules to the trans-Golgi network-associated endosomal compartments by an endocytic pathway to finally target them for degradation. MHC-I down-regulation may involve AP-1 (clathrin adapter protein complex 1) or possibly Src family kinase-ZAP70/Syk-PI3K cascade recruited by PACS2. In consequence infected cells are masked for immune recognition by cytotoxic T-lymphocytes. Decreasing the number of immune receptors also prevents reinfection by more HIV particles (superinfection). Down-regulates host SERINC3 and SERINC5 thereby excluding these proteins from the viral particles. Virion infectivity is drastically higher when SERINC3 or SERINC5 are excluded from the viral envelope, because these host antiviral proteins impair the membrane fusion event necessary for subsequent virion penetration. Bypasses host T-cell signaling by inducing a transcriptional program nearly identical to that of anti-CD3 cell activation. Interaction with TCR-zeta chain up-regulates the Fas ligand (FasL). Increasing surface FasL molecules and decreasing surface MHC-I molecules on infected CD4(+) cells send attacking cytotoxic CD8+ T-lymphocytes into apoptosis. Functionally, plays a role in optimizing the host cell environment for viral replication without causing cell death by apoptosis. Protects the infected cells from apoptosis in order to keep them alive until the next virus generation is ready to strike. Inhibits the Fas and TNFR-mediated death signals by blocking MAP3K5/ASK1. Decreases the half-life of TP53, protecting the infected cell against p53-mediated apoptosis. Inhibits the apoptotic signals regulated by the Bcl-2 family proteins through the formation of a Nef/PI3-kinase/PAK2 complex that leads to activation of PAK2 and induces phosphorylation of host BAD. Its function is as follows. Extracellular Nef protein targets CD4(+) T-lymphocytes for apoptosis by interacting with CXCR4 surface receptors. The protein is Protein Nef of Homo sapiens (Human).